The primary structure comprises 198 residues: V-type ATP synthase subunit E 1 (198 aa).

Belongs to the V-ATPase E subunit family.

In terms of biological role, produces ATP from ADP in the presence of a proton gradient across the membrane. The sequence is that of V-type ATP synthase subunit E 1 from Clostridium tetani (strain Massachusetts / E88).